The sequence spans 477 residues: UDP-N-acetylmuramate--L-alanine ligase (477 aa).

122-128 (GTHGKTT) is a binding site for ATP.

Belongs to the MurCDEF family.

It localises to the cytoplasm. It carries out the reaction UDP-N-acetyl-alpha-D-muramate + L-alanine + ATP = UDP-N-acetyl-alpha-D-muramoyl-L-alanine + ADP + phosphate + H(+). Its pathway is cell wall biogenesis; peptidoglycan biosynthesis. In terms of biological role, cell wall formation. This Xanthomonas campestris pv. campestris (strain 8004) protein is UDP-N-acetylmuramate--L-alanine ligase.